We begin with the raw amino-acid sequence, 612 residues long: Dihydroxy-acid dehydratase (612 aa).

Asp-81 serves as a coordination point for Mg(2+). Cys-122 is a binding site for [2Fe-2S] cluster. Asp-123 and Lys-124 together coordinate Mg(2+). Lys-124 is modified (N6-carboxylysine). Cys-193 is a binding site for [2Fe-2S] cluster. Mg(2+) is bound at residue Glu-489. The active-site Proton acceptor is Ser-515.

The protein belongs to the IlvD/Edd family. As to quaternary structure, homodimer. [2Fe-2S] cluster is required as a cofactor. It depends on Mg(2+) as a cofactor.

The catalysed reaction is (2R)-2,3-dihydroxy-3-methylbutanoate = 3-methyl-2-oxobutanoate + H2O. It catalyses the reaction (2R,3R)-2,3-dihydroxy-3-methylpentanoate = (S)-3-methyl-2-oxopentanoate + H2O. Its pathway is amino-acid biosynthesis; L-isoleucine biosynthesis; L-isoleucine from 2-oxobutanoate: step 3/4. The protein operates within amino-acid biosynthesis; L-valine biosynthesis; L-valine from pyruvate: step 3/4. Functions in the biosynthesis of branched-chain amino acids. Catalyzes the dehydration of (2R,3R)-2,3-dihydroxy-3-methylpentanoate (2,3-dihydroxy-3-methylvalerate) into 2-oxo-3-methylpentanoate (2-oxo-3-methylvalerate) and of (2R)-2,3-dihydroxy-3-methylbutanoate (2,3-dihydroxyisovalerate) into 2-oxo-3-methylbutanoate (2-oxoisovalerate), the penultimate precursor to L-isoleucine and L-valine, respectively. This is Dihydroxy-acid dehydratase from Stenotrophomonas maltophilia (strain R551-3).